A 269-amino-acid chain; its full sequence is Phycobilisome 37.5 kDa linker polypeptide, phycocyanin-associated, rod (269 aa).

Positions 2–177 (TSSTAARQLG…IYRGYANSDR (176 aa)) constitute a PBS-linker domain. One can recognise a CpcD-like domain in the interval 217–269 (GQLYRVRVIQADRGRTTQIRRSIQEYLVSYDQLSPTLQRLNQRGSRVVNISPA).

It belongs to the phycobilisome linker protein family.

The protein resides in the cellular thylakoid membrane. In terms of biological role, rod linker protein, associated with phycocyanin. Linker polypeptides determine the state of aggregation and the location of the disk-shaped phycobiliprotein units within the phycobilisome and modulate their spectroscopic properties in order to mediate a directed and optimal energy transfer. The protein is Phycobilisome 37.5 kDa linker polypeptide, phycocyanin-associated, rod (cpcH2) of Microchaete diplosiphon (Fremyella diplosiphon).